The chain runs to 138 residues: uncharacterized protein (138 aa).

This is an uncharacterized protein from Acanthamoeba polyphaga (Amoeba).